The sequence spans 430 residues: Serine carboxypeptidase-like 13 (430 aa).

The N-terminal stretch at 1-22 (MSLTLEFLLLLIVLILSHHAHS) is a signal peptide. Cystine bridges form between cysteine 81/cysteine 319, cysteine 240/cysteine 254, and cysteine 278/cysteine 285. Asparagine 102 is a glycosylation site (N-linked (GlcNAc...) asparagine). Residue serine 177 is part of the active site. Asparagine 299 and asparagine 323 each carry an N-linked (GlcNAc...) asparagine glycan. Residue aspartate 355 is part of the active site. Asparagine 371 is a glycosylation site (N-linked (GlcNAc...) asparagine). Histidine 408 is an active-site residue.

It belongs to the peptidase S10 family. In terms of tissue distribution, expression not detected.

The protein localises to the secreted. It catalyses the reaction 2 1-O-(trans-sinapoyl)-beta-D-glucose = 1,2-di-O-sinapoyl beta-D-glucose + D-glucose. Its function is as follows. Catalyzes the formation of 1,2-bis-O-sinapoyl beta-D-glucoside. The chain is Serine carboxypeptidase-like 13 (SCPL13) from Arabidopsis thaliana (Mouse-ear cress).